The sequence spans 248 residues: Cytochrome c oxidase subunit 2 (248 aa).

Over 1-36 (MLFFNSILNDAPSSWALYFQDGASPSYLGVTHLNDY) the chain is Mitochondrial intermembrane. The helical transmembrane segment at 37–57 (LMFYLTFIFIGVIYAICKAVI) threads the bilayer. The Mitochondrial matrix segment spans residues 58–75 (EYNYNSHPIAAKYTTHGS). The chain crosses the membrane as a helical span at residues 76–100 (IVEFIWTLIPALILILVALPSFKLL). Over 101–248 (YLLDEVQKPS…DFLAWLEENS (148 aa)) the chain is Mitochondrial intermembrane. 6 residues coordinate Cu cation: histidine 182, cysteine 217, glutamate 219, cysteine 221, histidine 225, and methionine 228. Glutamate 219 provides a ligand contact to Mg(2+).

It belongs to the cytochrome c oxidase subunit 2 family. In terms of assembly, component of the cytochrome c oxidase (complex IV, CIV), a multisubunit enzyme composed of a catalytic core of 3 subunits and several supernumerary subunits. The complex exists as a monomer or a dimer and forms supercomplexes (SCs) in the inner mitochondrial membrane with ubiquinol-cytochrome c oxidoreductase (cytochrome b-c1 complex, complex III, CIII). The cofactor is Cu cation.

The protein resides in the mitochondrion inner membrane. The catalysed reaction is 4 Fe(II)-[cytochrome c] + O2 + 8 H(+)(in) = 4 Fe(III)-[cytochrome c] + 2 H2O + 4 H(+)(out). In terms of biological role, component of the cytochrome c oxidase, the last enzyme in the mitochondrial electron transport chain which drives oxidative phosphorylation. The respiratory chain contains 3 multisubunit complexes succinate dehydrogenase (complex II, CII), ubiquinol-cytochrome c oxidoreductase (cytochrome b-c1 complex, complex III, CIII) and cytochrome c oxidase (complex IV, CIV), that cooperate to transfer electrons derived from NADH and succinate to molecular oxygen, creating an electrochemical gradient over the inner membrane that drives transmembrane transport and the ATP synthase. Cytochrome c oxidase is the component of the respiratory chain that catalyzes the reduction of oxygen to water. Electrons originating from reduced cytochrome c in the intermembrane space (IMS) are transferred via the dinuclear copper A center (CU(A)) of subunit 2 and heme A of subunit 1 to the active site in subunit 1, a binuclear center (BNC) formed by heme A3 and copper B (CU(B)). The BNC reduces molecular oxygen to 2 water molecules using 4 electrons from cytochrome c in the IMS and 4 protons from the mitochondrial matrix. This Schizosaccharomyces pombe (strain 972 / ATCC 24843) (Fission yeast) protein is Cytochrome c oxidase subunit 2 (cox2).